A 518-amino-acid polypeptide reads, in one-letter code: Bifunctional purine biosynthesis protein PurH (518 aa).

An MGS-like domain is found at 1 to 146 (MSPIALLSVS…KNHQDVLVVT (146 aa)).

Belongs to the PurH family.

It catalyses the reaction (6R)-10-formyltetrahydrofolate + 5-amino-1-(5-phospho-beta-D-ribosyl)imidazole-4-carboxamide = 5-formamido-1-(5-phospho-D-ribosyl)imidazole-4-carboxamide + (6S)-5,6,7,8-tetrahydrofolate. It carries out the reaction IMP + H2O = 5-formamido-1-(5-phospho-D-ribosyl)imidazole-4-carboxamide. Its pathway is purine metabolism; IMP biosynthesis via de novo pathway; 5-formamido-1-(5-phospho-D-ribosyl)imidazole-4-carboxamide from 5-amino-1-(5-phospho-D-ribosyl)imidazole-4-carboxamide (10-formyl THF route): step 1/1. It participates in purine metabolism; IMP biosynthesis via de novo pathway; IMP from 5-formamido-1-(5-phospho-D-ribosyl)imidazole-4-carboxamide: step 1/1. The chain is Bifunctional purine biosynthesis protein PurH from Prochlorococcus marinus (strain NATL2A).